Here is a 136-residue protein sequence, read N- to C-terminus: General odorant-binding protein 57d (136 aa).

Positions 1-29 (MPEKMSLRLVPHLACIIFILEIQFRIADS) are cleaved as a signal peptide. Disulfide bonds link C33–C70, C66–C118, and C107–C127.

This sequence belongs to the PBP/GOBP family.

Present in the aqueous fluid surrounding olfactory sensory dendrites and are thought to aid in the capture and transport of hydrophobic odorants into and through this fluid. In Drosophila melanogaster (Fruit fly), this protein is General odorant-binding protein 57d.